Reading from the N-terminus, the 161-residue chain is MTRNEKSEVIAKLESEFKDAQAIVVCDYHGLSVKKLEALRNAAREQNVKVQVIKNTLANIALKNSAKDGMSLKDTNIYLWSEDQLAVTKVVVKFEEANSEFFKIKTAYIDGEVASVDKVKALSKMPSRDELIAMLLQVWNAPIQNFTIGLNALKEKKEQSA.

Belongs to the universal ribosomal protein uL10 family. In terms of assembly, part of the ribosomal stalk of the 50S ribosomal subunit. The N-terminus interacts with L11 and the large rRNA to form the base of the stalk. The C-terminus forms an elongated spine to which L12 dimers bind in a sequential fashion forming a multimeric L10(L12)X complex.

Forms part of the ribosomal stalk, playing a central role in the interaction of the ribosome with GTP-bound translation factors. This is Large ribosomal subunit protein uL10 from Campylobacter curvus (strain 525.92).